Consider the following 457-residue polypeptide: Prenyltransferase ucdE (457 aa).

Residues arginine 106, lysine 198, lysine 277, tyrosine 279, tyrosine 382, tyrosine 447, and tyrosine 451 each contribute to the dimethylallyl diphosphate site.

It belongs to the tryptophan dimethylallyltransferase family.

It functions in the pathway secondary metabolite biosynthesis. Its function is as follows. Nonribosomal peptide synthetase that mediates the biosynthesis of usterphenyllins and uscandidusins, p-terphenyl derivatives. Within the pathway, ucdE prenylates position C-5 of ring A of 3,15-dihydroxyterphenyllin to produce forms usterphenyllin B. UcdE further prenylates position C-14 of ring C of usterphenyllin B to form usterphenyllin A. The pathway begin with the biosynthesis of 4-hydroxyphenylpyruvate (HPPA) from L-tyrosine, possibly by the aminotransferase ucdG. The nonribosomal peptide synthetase ucdA then condenses two HPPA units to produce atromentin. The key step in this pathway is the reduction and dehydration of atromentin to form a terphenyl triol intermediate, performed by the NAD-dependent dehydrogenase ucdB. Further O-methylation by the methyltransferase ucdC forms terphenyllin carrying two methoxy moieties at C-9 and C-12, and subsequent dihydroxylation at C-3 of ring A and C-15 of ring C by the flavin-dependent oxygenase ucdD leads to 3,15-dihydroxyterphenyllin. Prenylation by ucdE at position C-5 of ring A forms usterphenyllin B, and is followed by a second prenylation at position C-14 of ring C to form usterphenyllin A. The following furan ring formation that leads to uscandidusins A and B was proven to be an unexpected spontaneous non-enzymatic reaction. The protein is Prenyltransferase ucdE of Aspergillus ustus.